The chain runs to 105 residues: MKRLRVGDLVQVISGKEEGKQGRITKILADEDRVVVEGLNTVTRHQRPTPRNQEGGKITKEAPIHASKVMPVDPATGKPTRVKVRVGEDGKKTRVGKSGSAIGVG.

This sequence belongs to the universal ribosomal protein uL24 family. In terms of assembly, part of the 50S ribosomal subunit.

One of two assembly initiator proteins, it binds directly to the 5'-end of the 23S rRNA, where it nucleates assembly of the 50S subunit. Its function is as follows. One of the proteins that surrounds the polypeptide exit tunnel on the outside of the subunit. The protein is Large ribosomal subunit protein uL24 of Sorangium cellulosum (strain So ce56) (Polyangium cellulosum (strain So ce56)).